The following is a 189-amino-acid chain: NADH-quinone oxidoreductase subunit B (189 aa).

Residues cysteine 39, cysteine 40, cysteine 104, and cysteine 135 each coordinate [4Fe-4S] cluster.

It belongs to the complex I 20 kDa subunit family. NDH-1 is composed of 14 different subunits. Subunits NuoB, C, D, E, F, and G constitute the peripheral sector of the complex. The cofactor is [4Fe-4S] cluster.

Its subcellular location is the cell inner membrane. It catalyses the reaction a quinone + NADH + 5 H(+)(in) = a quinol + NAD(+) + 4 H(+)(out). In terms of biological role, NDH-1 shuttles electrons from NADH, via FMN and iron-sulfur (Fe-S) centers, to quinones in the respiratory chain. The immediate electron acceptor for the enzyme in this species is believed to be a menaquinone. Couples the redox reaction to proton translocation (for every two electrons transferred, four hydrogen ions are translocated across the cytoplasmic membrane), and thus conserves the redox energy in a proton gradient. This is NADH-quinone oxidoreductase subunit B from Chlorobium phaeovibrioides (strain DSM 265 / 1930) (Prosthecochloris vibrioformis (strain DSM 265)).